Consider the following 487-residue polypeptide: Cysteine--tRNA ligase (487 aa).

Position 27 (cysteine 27) interacts with Zn(2+). The 'HIGH' region signature appears at 29 to 39 (VTVYDLCHIGH). Positions 211, 236, and 240 each coordinate Zn(2+). A 'KMSKS' region motif is present at residues 268 to 272 (KMSKS). Lysine 271 lines the ATP pocket.

This sequence belongs to the class-I aminoacyl-tRNA synthetase family. Monomer. The cofactor is Zn(2+).

The protein localises to the cytoplasm. The catalysed reaction is tRNA(Cys) + L-cysteine + ATP = L-cysteinyl-tRNA(Cys) + AMP + diphosphate. The sequence is that of Cysteine--tRNA ligase from Thermodesulfovibrio yellowstonii (strain ATCC 51303 / DSM 11347 / YP87).